A 118-amino-acid chain; its full sequence is Small ribosomal subunit protein uS13 (118 aa).

Residues 94–118 (SLPLRGQRTKTNARTRKGPRKPIRK) are disordered.

This sequence belongs to the universal ribosomal protein uS13 family. Part of the 30S ribosomal subunit. Forms a loose heterodimer with protein S19. Forms two bridges to the 50S subunit in the 70S ribosome.

Its function is as follows. Located at the top of the head of the 30S subunit, it contacts several helices of the 16S rRNA. In the 70S ribosome it contacts the 23S rRNA (bridge B1a) and protein L5 of the 50S subunit (bridge B1b), connecting the 2 subunits; these bridges are implicated in subunit movement. Contacts the tRNAs in the A and P-sites. This Shewanella frigidimarina (strain NCIMB 400) protein is Small ribosomal subunit protein uS13.